The following is a 436-amino-acid chain: GTPase Der (436 aa).

2 consecutive EngA-type G domains span residues 4–167 and 176–351; these read PIVA…DEET and IRLS…ENHK. Residues 10-17, 57-61, 119-122, 182-189, 229-233, and 294-297 contribute to the GTP site; these read GRPNVGKS, DTGGI, NKVD, DTAGM, and NKWD. In terms of domain architecture, KH-like spans 352–436; the sequence is KRVQSSTLNE…PIHIIPRRRN (85 aa).

Belongs to the TRAFAC class TrmE-Era-EngA-EngB-Septin-like GTPase superfamily. EngA (Der) GTPase family. In terms of assembly, associates with the 50S ribosomal subunit.

Its function is as follows. GTPase that plays an essential role in the late steps of ribosome biogenesis. The chain is GTPase Der from Staphylococcus haemolyticus (strain JCSC1435).